The following is a 338-amino-acid chain: Glycerol-3-phosphate dehydrogenase [NAD(P)+] (338 aa).

Residues Trp-11, Arg-30, and Lys-109 each contribute to the NADPH site. Sn-glycerol 3-phosphate is bound by residues Lys-109, Gly-143, and Ser-145. Residue Ala-147 coordinates NADPH. Sn-glycerol 3-phosphate-binding residues include Lys-198, Asp-251, Ser-261, Arg-262, and Asn-263. The Proton acceptor role is filled by Lys-198. An NADPH-binding site is contributed by Arg-262. Val-286 and Glu-288 together coordinate NADPH.

It belongs to the NAD-dependent glycerol-3-phosphate dehydrogenase family.

Its subcellular location is the cytoplasm. The catalysed reaction is sn-glycerol 3-phosphate + NAD(+) = dihydroxyacetone phosphate + NADH + H(+). The enzyme catalyses sn-glycerol 3-phosphate + NADP(+) = dihydroxyacetone phosphate + NADPH + H(+). Its pathway is membrane lipid metabolism; glycerophospholipid metabolism. In terms of biological role, catalyzes the reduction of the glycolytic intermediate dihydroxyacetone phosphate (DHAP) to sn-glycerol 3-phosphate (G3P), the key precursor for phospholipid synthesis. The protein is Glycerol-3-phosphate dehydrogenase [NAD(P)+] of Cupriavidus necator (strain ATCC 17699 / DSM 428 / KCTC 22496 / NCIMB 10442 / H16 / Stanier 337) (Ralstonia eutropha).